The chain runs to 503 residues: Cytochrome P450 11B1, mitochondrial (503 aa).

The transit peptide at 1–24 (MALRAKAEVCMAAPWLSLQRARAL) directs the protein to the mitochondrion. C450 is a heme binding site.

The protein belongs to the cytochrome P450 family. Requires heme as cofactor.

It is found in the mitochondrion inner membrane. It carries out the reaction a steroid + 2 reduced [adrenodoxin] + O2 + 2 H(+) = an 11beta-hydroxysteroid + 2 oxidized [adrenodoxin] + H2O. It catalyses the reaction 11-deoxycortisol + 2 reduced [adrenodoxin] + O2 + 2 H(+) = cortisol + 2 oxidized [adrenodoxin] + H2O. The catalysed reaction is 21-hydroxyprogesterone + 2 reduced [adrenodoxin] + O2 + 2 H(+) = corticosterone + 2 oxidized [adrenodoxin] + H2O. The enzyme catalyses 21-hydroxyprogesterone + 2 reduced [adrenodoxin] + O2 + 2 H(+) = 18-hydroxy-11-deoxycorticosterone + 2 oxidized [adrenodoxin] + H2O. It carries out the reaction 21-hydroxyprogesterone + 2 reduced [adrenodoxin] + O2 + 2 H(+) = 19-hydroxy-11-deoxycorticosterone + 2 oxidized [adrenodoxin] + H2O. It catalyses the reaction cortisol + 2 reduced [adrenodoxin] + O2 + 2 H(+) = 18-hydroxycortisol + 2 oxidized [adrenodoxin] + H2O. The catalysed reaction is 11-deoxycortisol + 2 reduced [adrenodoxin] + O2 + 2 H(+) = 18-hydroxy-11-deoxycortisol + 2 oxidized [adrenodoxin] + H2O. It participates in steroid biosynthesis; glucocorticoid biosynthesis. Its pathway is steroid hormone biosynthesis. A cytochrome P450 monooxygenase involved in the biosynthesis of adrenal corticoids. Catalyzes a variety of reactions that are essential for many species, including detoxification, defense, and the formation of endogenous chemicals like steroid hormones. Steroid 11beta, 18- and 19-hydroxylase with preferred regioselectivity at 11beta, then 18, and lastly 19. Catalyzes the hydroxylation of 11-deoxycortisol and 11-deoxycorticosterone (21-hydroxyprogesterone) at 11beta position, yielding cortisol or corticosterone, respectively, but cannot produce aldosterone. Mechanistically, uses molecular oxygen inserting one oxygen atom into a substrate for hydroxylation and reducing the second into a water molecule. Two electrons are provided by NADPH via a two-protein mitochondrial transfer system comprising flavoprotein FDXR (adrenodoxin/ferredoxin reductase) and nonheme iron-sulfur protein FDX1 or FDX2 (adrenodoxin/ferredoxin). Due to its lack of 18-oxidation activity, it is incapable of generating aldosterone. Could also be involved in the androgen metabolic pathway. This Papio hamadryas ursinus (Chacma baboon) protein is Cytochrome P450 11B1, mitochondrial (CYP11B1).